A 292-amino-acid polypeptide reads, in one-letter code: Small ribosomal subunit biogenesis GTPase RsgA (292 aa).

In terms of domain architecture, CP-type G spans 64-221 (RSELFRPAVA…LVDTPGFSSL (158 aa)). GTP-binding positions include 113–116 (NKMD) and 164–172 (GPSGVGKST). Cys245, Cys250, His252, and Cys258 together coordinate Zn(2+).

Belongs to the TRAFAC class YlqF/YawG GTPase family. RsgA subfamily. As to quaternary structure, monomer. Associates with 30S ribosomal subunit, binds 16S rRNA. Requires Zn(2+) as cofactor.

Its subcellular location is the cytoplasm. One of several proteins that assist in the late maturation steps of the functional core of the 30S ribosomal subunit. Helps release RbfA from mature subunits. May play a role in the assembly of ribosomal proteins into the subunit. Circularly permuted GTPase that catalyzes slow GTP hydrolysis, GTPase activity is stimulated by the 30S ribosomal subunit. This chain is Small ribosomal subunit biogenesis GTPase RsgA, found in Clostridium botulinum (strain Okra / Type B1).